We begin with the raw amino-acid sequence, 479 residues long: Probable cytosol aminopeptidase (479 aa).

2 residues coordinate Mn(2+): Lys-247 and Asp-252. Lys-259 is an active-site residue. Asp-270, Asp-329, and Glu-331 together coordinate Mn(2+). The active site involves Arg-333.

Belongs to the peptidase M17 family. Requires Mn(2+) as cofactor.

The protein resides in the cytoplasm. It carries out the reaction Release of an N-terminal amino acid, Xaa-|-Yaa-, in which Xaa is preferably Leu, but may be other amino acids including Pro although not Arg or Lys, and Yaa may be Pro. Amino acid amides and methyl esters are also readily hydrolyzed, but rates on arylamides are exceedingly low.. The enzyme catalyses Release of an N-terminal amino acid, preferentially leucine, but not glutamic or aspartic acids.. In terms of biological role, presumably involved in the processing and regular turnover of intracellular proteins. Catalyzes the removal of unsubstituted N-terminal amino acids from various peptides. The sequence is that of Probable cytosol aminopeptidase from Vesicomyosocius okutanii subsp. Calyptogena okutanii (strain HA).